We begin with the raw amino-acid sequence, 276 residues long: Krueppel homolog 2 (276 aa).

Positions 1–37 (MSAPTDQPPRSEGAQTNSSERSSQQQEQPQQSQSQNV) are disordered. Low complexity predominate over residues 18-35 (SSERSSQQQEQPQQSQSQ). Position 22 is a phosphoserine (serine 22). 3 consecutive transmembrane segments (helical) span residues 53 to 73 (ALWALRLLVIFFTVSYVLPIF), 125 to 145 (LIFFNIRPSLLVLIPVLLYSV), and 181 to 201 (ILKATAFCEIFIMPYAIVLAF).

It belongs to the PER33/POM33 family.

It localises to the membrane. In terms of biological role, member of the dosage-dependent hierarchy effective upon white gene expression. This chain is Krueppel homolog 2 (Kr-h2), found in Drosophila melanogaster (Fruit fly).